The chain runs to 485 residues: Glycogen synthase (485 aa).

Residue Lys18 coordinates ADP-alpha-D-glucose.

This sequence belongs to the glycosyltransferase 1 family. Bacterial/plant glycogen synthase subfamily.

The catalysed reaction is [(1-&gt;4)-alpha-D-glucosyl](n) + ADP-alpha-D-glucose = [(1-&gt;4)-alpha-D-glucosyl](n+1) + ADP + H(+). Its pathway is glycan biosynthesis; glycogen biosynthesis. In terms of biological role, synthesizes alpha-1,4-glucan chains using ADP-glucose. The sequence is that of Glycogen synthase from Dechloromonas aromatica (strain RCB).